The sequence spans 407 residues: Accessory Sec system protein translocase subunit SecY2 (407 aa).

10 helical membrane-spanning segments follow: residues 22–42 (IAFTILILLIYILGSKITIVD), 68–88 (LNVFSLGLGPWLTAMIIISLI), 108–128 (EKFLTLGLSIIQGYFVINQFV), 136–156 (FTELLLLLILVTGAMLMMWLA), 169–189 (PIVLLSVIKSMFTQSLPIVSI), 191–211 (ILMLVVMVILIIVALFILLLT), 245–265 (ISIMISLSVFLLLTSTINLIF), 280–300 (FGHYMGVTIYLILQTVLGYLL), 343–363 (WFGTTIVTAIIGVPLYISLLV), and 366–386 (LSEYIYFAVQLMIMVYLAMNI).

Belongs to the SecY/SEC61-alpha family. SecY2 subfamily. In terms of assembly, component of the accessory SecA2/SecY2 protein translocase complex required to export cell wall proteins. May form heterotrimers with SecE and SecG subunits.

It localises to the cell membrane. Functionally, part of the accessory SecA2/SecY2 system specifically required for export of possible cell wall proteins. The central subunit of a protein translocation channel. This chain is Accessory Sec system protein translocase subunit SecY2, found in Staphylococcus pseudintermedius (strain ED99).